The following is a 618-amino-acid chain: Baculoviral IAP repeat-containing protein 2 (618 aa).

BIR repeat units follow at residues 46 to 113, 184 to 250, and 269 to 336; these read ELYR…CSFI, EEAR…CPFL, and HAAR…CEFL. Zn(2+) is bound by residues C306, C309, H326, and C333. The CARD domain maps to 453 to 543; the sequence is MASDDLSLIR…TLYKNLFVDK (91 aa). An RING-type zinc finger spans residues 571-606; the sequence is CKVCMDKEVSVVFIPCGHLVVCQECAPSLRKCPICR.

The protein belongs to the IAP family. As to quaternary structure, interacts with DIABLO/SMAC and with PRSS25; these interactions inhibit apoptotic suppressor activity. Interacts with CASP9. Interacts (via BIR domains) with TRAF2; the interaction is required for IKBKE ubiquitination. Interacts with E2F1, RIPK1, RIPK2, RIPK3, RIPK4, BIRC5/survivin and USP19. HSP90AB1. Interacts with UBXN1. Interacts with GSK3B. Interacts with several death receptors, inclusing FAS, TNFRSF10A and TNFRSF10B. Recruited to TNFRSF10B in the absence of receptor stimulation. When TNFRSF10B is stimulated, further recruited to the receptor and cleaved by caspases. Proteolytic fragments remain associated with TNFRSF10B. Post-translationally, auto-ubiquitinated and degraded by the proteasome in apoptotic cells. In terms of processing, upon stimulation of death receptors, including TNFRSF10B, recruited to receptors and cleaved by caspases. Proteolytic fragments remain associated with the receptors. This cleavage presumably inactivates the protein. As to expression, present in many fetal and adult tissues. Mainly expressed in adult skeletal muscle, thymus, testis, ovary, and pancreas, low or absent in brain and peripheral blood leukocytes.

The protein resides in the cytoplasm. It localises to the nucleus. The enzyme catalyses S-ubiquitinyl-[E2 ubiquitin-conjugating enzyme]-L-cysteine + [acceptor protein]-L-lysine = [E2 ubiquitin-conjugating enzyme]-L-cysteine + N(6)-ubiquitinyl-[acceptor protein]-L-lysine.. With respect to regulation, the CARD domain inhibits the activation of E3 ubiquitin ligase activity by preventing RING domain dimerization and E2 ubiquitin donor binding and activation. The CARD domain-mediated autoinhibition of the E3 ubiquitin-protein ligase activity suppresses cell proliferation and migration. USP19 regulates the stability of BIRC2/c-IAP1 by preventing its ubiquitination. Its function is as follows. Multi-functional protein which regulates not only caspases and apoptosis, but also modulates inflammatory signaling and immunity, mitogenic kinase signaling, and cell proliferation, as well as cell invasion and metastasis. Acts as an E3 ubiquitin-protein ligase regulating NF-kappa-B signaling and regulates both canonical and non-canonical NF-kappa-B signaling by acting in opposite directions: acts as a positive regulator of the canonical pathway and suppresses constitutive activation of non-canonical NF-kappa-B signaling. The target proteins for its E3 ubiquitin-protein ligase activity include: RIPK1, RIPK2, RIPK3, RIPK4, CASP3, CASP7, CASP8, TRAF2, DIABLO/SMAC, MAP3K14/NIK, MAP3K5/ASK1, IKBKG/NEMO, IKBKE and MXD1/MAD1. Can also function as an E3 ubiquitin-protein ligase of the NEDD8 conjugation pathway, targeting effector caspases for neddylation and inactivation. Acts as an important regulator of innate immune signaling via regulation of Toll-like receptors (TLRs), Nodlike receptors (NLRs) and RIG-I like receptors (RLRs), collectively referred to as pattern recognition receptors (PRRs). Protects cells from spontaneous formation of the ripoptosome, a large multi-protein complex that has the capability to kill cancer cells in a caspase-dependent and caspase-independent manner. Suppresses ripoptosome formation by ubiquitinating RIPK1 and CASP8. Can stimulate the transcriptional activity of E2F1. Plays a role in the modulation of the cell cycle. The polypeptide is Baculoviral IAP repeat-containing protein 2 (BIRC2) (Homo sapiens (Human)).